Consider the following 426-residue polypeptide: Elongation factor 1-alpha (426 aa).

The tr-type G domain occupies 5–221; it reads KPHINLAVIG…NALKEPEKPT (217 aa). The segment at 14 to 21 is G1; that stretch reads GHIDHGKS. Residue 14 to 21 coordinates GTP; sequence GHIDHGKS. Residue Ser21 coordinates Mg(2+). Positions 70-74 are G2; that stretch reads GITID. Residues 91–94 form a G3 region; sequence DCPG. GTP contacts are provided by residues 91 to 95 and 146 to 149; these read DCPGH and NKMD. The G4 stretch occupies residues 146–149; the sequence is NKMD. Residues 185–187 form a G5 region; the sequence is SAF.

The protein belongs to the TRAFAC class translation factor GTPase superfamily. Classic translation factor GTPase family. EF-Tu/EF-1A subfamily.

Its subcellular location is the cytoplasm. The catalysed reaction is GTP + H2O = GDP + phosphate + H(+). Functionally, GTP hydrolase that promotes the GTP-dependent binding of aminoacyl-tRNA to the A-site of ribosomes during protein biosynthesis. The protein is Elongation factor 1-alpha of Methanocella arvoryzae (strain DSM 22066 / NBRC 105507 / MRE50).